The following is a 146-amino-acid chain: Snaclec 1 (146 aa).

Positions 1–23 (MGRFIFISFGLLVVFLSLSGTEA) are cleaved as a signal peptide. Cystine bridges form between Cys25-Cys36, Cys53-Cys142, and Cys119-Cys134. A C-type lectin domain is found at 32 to 143 (YEGHCYRVFD…CRNYGHFVCK (112 aa)).

Belongs to the snaclec family. Heterodimer; disulfide-linked. As to expression, expressed by the venom gland.

It is found in the secreted. Interferes with one step of hemostasis (modulation of platelet aggregation, or coagulation cascade, for example). The chain is Snaclec 1 from Bitis arietans (African puff adder).